Reading from the N-terminus, the 695-residue chain is Putative pentatricopeptide repeat-containing protein At1g77010, mitochondrial (695 aa).

Residues 1–64 (MILKYNSSYR…KGFLSSIVIV (64 aa)) constitute a mitochondrion transit peptide. PPR repeat units follow at residues 61-91 (IVIV…MPDR), 92-122 (NYFS…MPER), 123-157 (DGYS…DVVT), 159-184 (NSLL…LNFS), 186-220 (DAIT…GVEC), 221-251 (DSKM…IREP), 252-282 (DDHS…KSNR), 283-313 (CVIL…MRNE), 317-351 (DSRT…GLID), 352-382 (DIVV…VESY), 383-417 (DTIL…SLIS), 418-448 (WNSM…DLPT), 449-483 (DEVS…GLDS), 484-514 (DQVV…MVKS), 515-549 (DEVP…GIRP), 550-585 (TQIT…GFVP), and 586-616 (DKEH…MPFD). The tract at residues 621-695 (MWSSILRGCV…KNPGSSWTDC (75 aa)) is type E motif; degenerate.

It belongs to the PPR family. PCMP-E subfamily.

Its subcellular location is the mitochondrion. This Arabidopsis thaliana (Mouse-ear cress) protein is Putative pentatricopeptide repeat-containing protein At1g77010, mitochondrial (PCMP-E5).